A 215-amino-acid chain; its full sequence is Octanoyltransferase (215 aa).

The region spanning 31–206 (PESQDEVWLV…QLVRHLDYAE (176 aa)) is the BPL/LPL catalytic domain. Substrate is bound by residues 70-77 (RGGQVTYH), 137-139 (SLG), and 150-152 (GLA). Cys168 acts as the Acyl-thioester intermediate in catalysis.

Belongs to the LipB family.

It is found in the cytoplasm. The enzyme catalyses octanoyl-[ACP] + L-lysyl-[protein] = N(6)-octanoyl-L-lysyl-[protein] + holo-[ACP] + H(+). It functions in the pathway protein modification; protein lipoylation via endogenous pathway; protein N(6)-(lipoyl)lysine from octanoyl-[acyl-carrier-protein]: step 1/2. Functionally, catalyzes the transfer of endogenously produced octanoic acid from octanoyl-acyl-carrier-protein onto the lipoyl domains of lipoate-dependent enzymes. Lipoyl-ACP can also act as a substrate although octanoyl-ACP is likely to be the physiological substrate. This is Octanoyltransferase from Pseudomonas entomophila (strain L48).